A 155-amino-acid chain; its full sequence is Deoxyuridine 5'-triphosphate nucleotidohydrolase (155 aa).

Substrate is bound by residues 74–76 (RSG), asparagine 87, and 91–93 (TID).

Belongs to the dUTPase family. It depends on Mg(2+) as a cofactor.

It carries out the reaction dUTP + H2O = dUMP + diphosphate + H(+). It functions in the pathway pyrimidine metabolism; dUMP biosynthesis; dUMP from dCTP (dUTP route): step 2/2. In terms of biological role, this enzyme is involved in nucleotide metabolism: it produces dUMP, the immediate precursor of thymidine nucleotides and it decreases the intracellular concentration of dUTP so that uracil cannot be incorporated into DNA. The sequence is that of Deoxyuridine 5'-triphosphate nucleotidohydrolase from Cereibacter sphaeroides (strain ATCC 17023 / DSM 158 / JCM 6121 / CCUG 31486 / LMG 2827 / NBRC 12203 / NCIMB 8253 / ATH 2.4.1.) (Rhodobacter sphaeroides).